Reading from the N-terminus, the 172-residue chain is Ribosome maturation factor RimM (172 aa).

The 73-residue stretch at 96-168 (EGEFYYHQII…RVDVELMEGL (73 aa)) folds into the PRC barrel domain.

It belongs to the RimM family. As to quaternary structure, binds ribosomal protein uS19.

The protein localises to the cytoplasm. In terms of biological role, an accessory protein needed during the final step in the assembly of 30S ribosomal subunit, possibly for assembly of the head region. Essential for efficient processing of 16S rRNA. May be needed both before and after RbfA during the maturation of 16S rRNA. It has affinity for free ribosomal 30S subunits but not for 70S ribosomes. In Streptococcus pyogenes serotype M1, this protein is Ribosome maturation factor RimM.